We begin with the raw amino-acid sequence, 304 residues long: GTPase Era (304 aa).

The Era-type G domain occupies 11 to 179 (YCGFIAIVGR…QKIVRKSLRE (169 aa)). The tract at residues 19–26 (GRPNVGKS) is G1. 19-26 (GRPNVGKS) is a binding site for GTP. The interval 45 to 49 (QTTRH) is G2. The interval 66–69 (DTPG) is G3. Residues 66–70 (DTPGL) and 128–131 (NKVD) contribute to the GTP site. The tract at residues 128–131 (NKVD) is G4. Residues 158-160 (ISA) are G5. The KH type-2 domain occupies 210 to 287 (TGEELPYSVT…HLELWVKVKA (78 aa)).

This sequence belongs to the TRAFAC class TrmE-Era-EngA-EngB-Septin-like GTPase superfamily. Era GTPase family. As to quaternary structure, monomer.

Its subcellular location is the cytoplasm. It localises to the cell inner membrane. Its function is as follows. An essential GTPase that binds both GDP and GTP, with rapid nucleotide exchange. Plays a role in 16S rRNA processing and 30S ribosomal subunit biogenesis and possibly also in cell cycle regulation and energy metabolism. The sequence is that of GTPase Era from Actinobacillus pleuropneumoniae serotype 5b (strain L20).